The chain runs to 135 residues: MPTINQLVRKGREKVEKKSKAPALQGNPQKRGVCVRVYTTTPKKPNSALRKVARVRLSNGYEVTCYIPGIGHNLQEHSIVLVRGGRVKDLPGVRYKIIRGALDAAGVKDRKQSRSKYGAKRPKPGQAAATTGKKK.

Positions 1–29 (MPTINQLVRKGREKVEKKSKAPALQGNPQ) are disordered. Asp-89 is modified (3-methylthioaspartic acid). The segment at 106 to 135 (GVKDRKQSRSKYGAKRPKPGQAAATTGKKK) is disordered. Basic residues predominate over residues 113-123 (SRSKYGAKRPK).

The protein belongs to the universal ribosomal protein uS12 family. As to quaternary structure, part of the 30S ribosomal subunit. Contacts proteins S8 and S17. May interact with IF1 in the 30S initiation complex.

Functionally, with S4 and S5 plays an important role in translational accuracy. Its function is as follows. Interacts with and stabilizes bases of the 16S rRNA that are involved in tRNA selection in the A site and with the mRNA backbone. Located at the interface of the 30S and 50S subunits, it traverses the body of the 30S subunit contacting proteins on the other side and probably holding the rRNA structure together. The combined cluster of proteins S8, S12 and S17 appears to hold together the shoulder and platform of the 30S subunit. The sequence is that of Small ribosomal subunit protein uS12 from Sulfurihydrogenibium sp. (strain YO3AOP1).